A 353-amino-acid polypeptide reads, in one-letter code: Farnesyl pyrophosphate synthase (353 aa).

Isopentenyl diphosphate-binding residues include K57, R60, and Q96. N6-(2-hydroxyisobutyryl)lysine; alternate is present on K57. K57 bears the N6-acetyllysine; alternate mark. Mg(2+) is bound by residues D103 and D107. R112 contacts dimethylallyl diphosphate. R113 provides a ligand contact to isopentenyl diphosphate. Dimethylallyl diphosphate is bound by residues K200, T201, Q240, K257, and K266.

The protein belongs to the FPP/GGPP synthase family. Homodimer. Interacts with RSAD2. Mg(2+) serves as cofactor. Testis, liver, kidney, brain and adrenal gland.

Its subcellular location is the cytoplasm. It carries out the reaction isopentenyl diphosphate + dimethylallyl diphosphate = (2E)-geranyl diphosphate + diphosphate. It catalyses the reaction isopentenyl diphosphate + (2E)-geranyl diphosphate = (2E,6E)-farnesyl diphosphate + diphosphate. It functions in the pathway isoprenoid biosynthesis; farnesyl diphosphate biosynthesis; farnesyl diphosphate from geranyl diphosphate and isopentenyl diphosphate: step 1/1. Its pathway is isoprenoid biosynthesis; geranyl diphosphate biosynthesis; geranyl diphosphate from dimethylallyl diphosphate and isopentenyl diphosphate: step 1/1. Its activity is regulated as follows. Inactivated by interferon-induced RSAD2. This inactivation may result of disruption of lipid rafts at the plasma membrane, and thus have an antiviral effect since many enveloped viruses need lipid rafts to bud efficiently out of the cell. Functionally, key enzyme in isoprenoid biosynthesis which catalyzes the formation of farnesyl diphosphate (FPP), a precursor for several classes of essential metabolites including sterols, dolichols, carotenoids, and ubiquinones. FPP also serves as substrate for protein farnesylation and geranylgeranylation. Catalyzes the sequential condensation of isopentenyl pyrophosphate with the allylic pyrophosphates, dimethylallyl pyrophosphate, and then with the resultant geranylpyrophosphate to the ultimate product farnesyl pyrophosphate. The sequence is that of Farnesyl pyrophosphate synthase (Fdps) from Rattus norvegicus (Rat).